Here is a 277-residue protein sequence, read N- to C-terminus: Kallikrein-13 (277 aa).

A signal peptide spans 1 to 16 (MWPLALVIASLTLALS). An N-linked (GlcNAc...) asparagine glycan is attached at asparagine 30. Positions 36 to 263 (LPGGYTCFPH…YVLWIRETIR (228 aa)) constitute a Peptidase S1 domain. Disulfide bonds link cysteine 42–cysteine 178, cysteine 61–cysteine 77, cysteine 157–cysteine 224, cysteine 189–cysteine 203, and cysteine 214–cysteine 239. Active-site charge relay system residues include histidine 76 and aspartate 124. The active-site Charge relay system is serine 218. Residue asparagine 225 is glycosylated (N-linked (GlcNAc...) asparagine).

The protein belongs to the peptidase S1 family. Kallikrein subfamily. In terms of tissue distribution, expressed in prostate, breast, testis and salivary gland.

It localises to the secreted. In Homo sapiens (Human), this protein is Kallikrein-13 (KLK13).